The primary structure comprises 318 residues: Homoserine kinase (318 aa).

97 to 107 contributes to the ATP binding site; the sequence is PIGSGLGSSAC.

Belongs to the GHMP kinase family. Homoserine kinase subfamily.

Its subcellular location is the cytoplasm. It catalyses the reaction L-homoserine + ATP = O-phospho-L-homoserine + ADP + H(+). Its pathway is amino-acid biosynthesis; L-threonine biosynthesis; L-threonine from L-aspartate: step 4/5. Functionally, catalyzes the ATP-dependent phosphorylation of L-homoserine to L-homoserine phosphate. In Aliivibrio fischeri (strain MJ11) (Vibrio fischeri), this protein is Homoserine kinase.